The sequence spans 404 residues: uncharacterized protein (404 aa).

11 helical membrane passes run 15 to 35, 43 to 63, 84 to 104, 121 to 141, 154 to 174, 187 to 207, 231 to 251, 279 to 299, 316 to 336, 338 to 358, and 373 to 393; these read WSLLMGAAFLMATSAIGPGFL, NTLAASFGFVILISIILDIFA, MVLPGLGYFIAILVVLGGLAF, GITPETGALISAVIAILIFVI, IAGFVMIILTVYVAATTAPPV, ISIFAIVTLVGGTVGGYITFA, VVGILITSVMRIALFLAVLGV, IFGLIMWSAAITSVIGAAYTS, GIIIGFIVVSTLAFVTIGQPA, ILVLVGSLNGLILPIALGTLL, and PLWLTSTGALVVIVMAVMGIY.

It belongs to the NRAMP family.

It localises to the cell membrane. This is an uncharacterized protein from Bacillus subtilis (strain 168).